The chain runs to 213 residues: Pyrrolidone-carboxylate peptidase (213 aa).

Residues Glu78, Cys141, and His165 contribute to the active site.

The protein belongs to the peptidase C15 family. Homotetramer.

It is found in the cytoplasm. It catalyses the reaction Release of an N-terminal pyroglutamyl group from a polypeptide, the second amino acid generally not being Pro.. In terms of biological role, removes 5-oxoproline from various penultimate amino acid residues except L-proline. This Staphylococcus saprophyticus subsp. saprophyticus (strain ATCC 15305 / DSM 20229 / NCIMB 8711 / NCTC 7292 / S-41) protein is Pyrrolidone-carboxylate peptidase.